The following is a 129-amino-acid chain: Small ribosomal subunit protein uS11 (129 aa).

This sequence belongs to the universal ribosomal protein uS11 family. As to quaternary structure, part of the 30S ribosomal subunit. Interacts with proteins S7 and S18. Binds to IF-3.

Functionally, located on the platform of the 30S subunit, it bridges several disparate RNA helices of the 16S rRNA. Forms part of the Shine-Dalgarno cleft in the 70S ribosome. This chain is Small ribosomal subunit protein uS11, found in Sodalis glossinidius (strain morsitans).